The sequence spans 245 residues: DNA repair protein RecO (245 aa).

It belongs to the RecO family.

In terms of biological role, involved in DNA repair and RecF pathway recombination. This is DNA repair protein RecO from Pectobacterium atrosepticum (strain SCRI 1043 / ATCC BAA-672) (Erwinia carotovora subsp. atroseptica).